We begin with the raw amino-acid sequence, 420 residues long: Serine hydroxymethyltransferase (420 aa).

Residues Leu-121 and Gly-125–Leu-127 each bind (6S)-5,6,7,8-tetrahydrofolate. Lys-230 bears the N6-(pyridoxal phosphate)lysine mark. (6S)-5,6,7,8-tetrahydrofolate is bound by residues Glu-246 and Ser-354–Phe-356.

This sequence belongs to the SHMT family. Homodimer. Pyridoxal 5'-phosphate serves as cofactor.

The protein localises to the cytoplasm. The enzyme catalyses (6R)-5,10-methylene-5,6,7,8-tetrahydrofolate + glycine + H2O = (6S)-5,6,7,8-tetrahydrofolate + L-serine. It functions in the pathway one-carbon metabolism; tetrahydrofolate interconversion. The protein operates within amino-acid biosynthesis; glycine biosynthesis; glycine from L-serine: step 1/1. Its function is as follows. Catalyzes the reversible interconversion of serine and glycine with tetrahydrofolate (THF) serving as the one-carbon carrier. This reaction serves as the major source of one-carbon groups required for the biosynthesis of purines, thymidylate, methionine, and other important biomolecules. Also exhibits THF-independent aldolase activity toward beta-hydroxyamino acids, producing glycine and aldehydes, via a retro-aldol mechanism. This chain is Serine hydroxymethyltransferase, found in Rickettsia canadensis (strain McKiel).